A 489-amino-acid polypeptide reads, in one-letter code: Bridging integrator 2 (489 aa).

Positions Val28–Asn244 constitute a BAR domain. The span at Gln267–Thr302 shows a compositional bias: low complexity. Residues Gln267–Leu489 are disordered. Position 273 is a phosphoserine (Ser273). The segment covering Gly311–Gln331 has biased composition (acidic residues). Ser357 carries the post-translational modification Phosphoserine. Positions Gln358–Ser368 are enriched in low complexity. Residues Ser380, Ser392, Ser420, Ser422, Ser424, Ser430, Ser435, Ser439, and Ser443 each carry the phosphoserine modification.

In terms of assembly, homodimer. Interacts with BIN1. Interacts with ARHGEF6 (via SH3 domain), ARHGEF7 (via SH3 domain), SH3GL1, SH3GL2 and SH3GL3. Identified in a complex with ARHGEF6 and GIT2.

Its subcellular location is the cytoplasm. The protein resides in the cell projection. The protein localises to the podosome membrane. It is found in the cell cortex. It localises to the phagocytic cup. Functionally, promotes cell motility and migration, probably via its interaction with the cell membrane and with podosome proteins that mediate interaction with the cytoskeleton. Modulates membrane curvature and mediates membrane tubulation. Inhibits phagocytosis. Plays a role in podosome formation. The protein is Bridging integrator 2 (Bin2) of Mus musculus (Mouse).